Consider the following 215-residue polypeptide: S-crystallin 3 (215 aa).

A GST N-terminal domain is found at 2–80 (PSYTLHYFNH…YLAREFGYHG (79 aa)). The GST C-terminal domain occupies 82–215 (SNMEMARVDF…YLKKRCRTDF (134 aa)).

Belongs to the GST superfamily. In terms of tissue distribution, lens.

S-crystallins are structural components of squids and octopi eye lens. Contains relatively little if any GST activity. This chain is S-crystallin 3, found in Enteroctopus dofleini (North Pacific giant octopus).